The chain runs to 153 residues: Ribonuclease P protein component (153 aa).

Belongs to the RnpA family. In terms of assembly, consists of a catalytic RNA component (M1 or rnpB) and a protein subunit.

It carries out the reaction Endonucleolytic cleavage of RNA, removing 5'-extranucleotides from tRNA precursor.. RNaseP catalyzes the removal of the 5'-leader sequence from pre-tRNA to produce the mature 5'-terminus. It can also cleave other RNA substrates such as 4.5S RNA. The protein component plays an auxiliary but essential role in vivo by binding to the 5'-leader sequence and broadening the substrate specificity of the ribozyme. This Helicobacter acinonychis (strain Sheeba) protein is Ribonuclease P protein component.